Here is a 366-residue protein sequence, read N- to C-terminus: MAICIPVNLPDRSYNILIEKGSLANLGGEMSQLSLGKKVLLVSNPEIFDYYGQIAVNSLEKAGFAVFTHLIPAGENYKTLDAIAQVYDSALAHRLERSSTMVALGGGVIGDMTGFAAATWLRGVNFVQVPTTLLAMVDASIGGKTGVNHPQGKNLIGAFYQPKLVLIDPDVLKTLPVREFRAGMAEVIKYGVIWDAELFQQLEDSDNLASFSQIDGELLQTIITKSCQAKADVVSKDEKEAGLRAILNYGHTIAHGIESLTGYTSVNHGEAVALGMVAAGAIAVKLGMWTAGENQRQTDLIEKAALETRMPPLNADEMVNALTADKKVKDGQVRFILPTAIGQVTISDRVTPTLVREVLSPTESGQ.

NAD(+) is bound by residues 107–111, 131–132, lysine 144, and lysine 153; these read GVIGD and TT. Residues glutamate 186, histidine 251, and histidine 268 each contribute to the Zn(2+) site.

It belongs to the sugar phosphate cyclases superfamily. Dehydroquinate synthase family. The cofactor is Co(2+). Requires Zn(2+) as cofactor. It depends on NAD(+) as a cofactor.

The protein localises to the cytoplasm. The enzyme catalyses 7-phospho-2-dehydro-3-deoxy-D-arabino-heptonate = 3-dehydroquinate + phosphate. Its pathway is metabolic intermediate biosynthesis; chorismate biosynthesis; chorismate from D-erythrose 4-phosphate and phosphoenolpyruvate: step 2/7. Its function is as follows. Catalyzes the conversion of 3-deoxy-D-arabino-heptulosonate 7-phosphate (DAHP) to dehydroquinate (DHQ). The sequence is that of 3-dehydroquinate synthase from Microcystis aeruginosa (strain NIES-843 / IAM M-2473).